We begin with the raw amino-acid sequence, 252 residues long: Triosephosphate isomerase (252 aa).

11–13 (NWK) serves as a coordination point for substrate. The Electrophile role is filled by histidine 97. The active-site Proton acceptor is the glutamate 169. Residues glycine 175, serine 215, and 236–237 (GG) contribute to the substrate site.

It belongs to the triosephosphate isomerase family. In terms of assembly, homodimer.

It localises to the cytoplasm. The enzyme catalyses D-glyceraldehyde 3-phosphate = dihydroxyacetone phosphate. Its pathway is carbohydrate biosynthesis; gluconeogenesis. It participates in carbohydrate degradation; glycolysis; D-glyceraldehyde 3-phosphate from glycerone phosphate: step 1/1. Functionally, involved in the gluconeogenesis. Catalyzes stereospecifically the conversion of dihydroxyacetone phosphate (DHAP) to D-glyceraldehyde-3-phosphate (G3P). In Mycoplasmoides gallisepticum (strain R(low / passage 15 / clone 2)) (Mycoplasma gallisepticum), this protein is Triosephosphate isomerase.